Consider the following 494-residue polypeptide: Cytochrome P450 2G1 (494 aa).

Cys439 is a binding site for heme.

It belongs to the cytochrome P450 family. It depends on heme as a cofactor. Olfactory epithelium.

Its subcellular location is the endoplasmic reticulum membrane. The protein resides in the microsome membrane. The enzyme catalyses an organic molecule + reduced [NADPH--hemoprotein reductase] + O2 = an alcohol + oxidized [NADPH--hemoprotein reductase] + H2O + H(+). Cytochromes P450 are a group of heme-thiolate monooxygenases. This isozyme seems to be implicated in olfaction. This chain is Cytochrome P450 2G1 (CYP2G1), found in Oryctolagus cuniculus (Rabbit).